We begin with the raw amino-acid sequence, 63 residues long: MSLLNSICSFSGLNRNNNKNAKNINSNIFNNFNNQSTNKIAGSDYMMFESSGNGYRKTRDGVI.

This is an uncharacterized protein from Dictyostelium discoideum (Social amoeba).